The sequence spans 287 residues: Chlorophyll a-b binding protein CP29.2, chloroplastic (287 aa).

Residues 1–31 constitute a chloroplast transit peptide; the sequence is MAATSTAAAASSIMGTRVVSDISSNSSRFTA. R32 carries the N2-acetylarginine modification. T37 bears the Phosphothreonine mark. W55 lines the chlorophyll b pocket. F75 provides a ligand contact to chlorophyll a. Phosphothreonine occurs at positions 109 and 111. The chlorophyll a site is built by E137 and H140. Residues 143 to 163 traverse the membrane as a helical segment; the sequence is WAMLATLGAITVEWLTGVTWQ. Chlorophyll a is bound at residue L177. The helical transmembrane segment at 181 to 201 threads the bilayer; it reads LPFSISTLIWIEVLVIGYIEF. Chlorophyll b is bound by residues E200 and R203. E239, H242, R244, Q256, and H271 together coordinate chlorophyll a. The chain crosses the membrane as a helical span at residues 245–265; that stretch reads LAMVGFLGFAVQAAATGKGPL.

It belongs to the light-harvesting chlorophyll a/b-binding (LHC) protein family. The LHC complex consists of chlorophyll a-b binding proteins. Requires Binds at least 14 chlorophylls (8 Chl-a and 6 Chl-b) and carotenoids such as lutein and neoxanthin. as cofactor. Post-translationally, photoregulated by reversible phosphorylation of its threonine residues.

The protein localises to the plastid. Its subcellular location is the chloroplast thylakoid membrane. Its function is as follows. The light-harvesting complex (LHC) functions as a light receptor, it captures and delivers excitation energy to photosystems with which it is closely associated. The sequence is that of Chlorophyll a-b binding protein CP29.2, chloroplastic (LHCB4.2) from Arabidopsis thaliana (Mouse-ear cress).